Reading from the N-terminus, the 230-residue chain is Cytochrome c-552 (230 aa).

The N-terminal stretch at 1 to 47 is a signal peptide; that stretch reads MTTYLSQDRLRNKENDTMTYQHSKMYQSRTFLLFSALLLVAGQASAA. Heme c-binding residues include Cys63, Cys66, His67, Cys166, Cys169, and His170.

In terms of processing, binds 2 heme c groups covalently per subunit.

The protein localises to the periplasm. In terms of biological role, diheme, high potential cytochrome c. The protein is Cytochrome c-552 (cyc1) of Acidithiobacillus ferridurans.